We begin with the raw amino-acid sequence, 147 residues long: Small ribosomal subunit protein bS18 (147 aa).

Belongs to the bacterial ribosomal protein bS18 family. Part of the 30S ribosomal subunit. Forms a tight heterodimer with protein bS6.

Binds as a heterodimer with protein bS6 to the central domain of the 16S rRNA, where it helps stabilize the platform of the 30S subunit. This Dehalococcoides mccartyi (strain ATCC BAA-2100 / JCM 16839 / KCTC 5957 / BAV1) protein is Small ribosomal subunit protein bS18.